The chain runs to 354 residues: Uroporphyrinogen decarboxylase (354 aa).

Substrate is bound by residues 27–31 (RQAGR), D77, Y154, T209, and H327.

Belongs to the uroporphyrinogen decarboxylase family. Homodimer.

Its subcellular location is the cytoplasm. It catalyses the reaction uroporphyrinogen III + 4 H(+) = coproporphyrinogen III + 4 CO2. It participates in porphyrin-containing compound metabolism; protoporphyrin-IX biosynthesis; coproporphyrinogen-III from 5-aminolevulinate: step 4/4. Its function is as follows. Catalyzes the decarboxylation of four acetate groups of uroporphyrinogen-III to yield coproporphyrinogen-III. This chain is Uroporphyrinogen decarboxylase, found in Enterobacter sp. (strain 638).